The sequence spans 308 residues: Nodulation protein D 1 (308 aa).

In terms of domain architecture, HTH lysR-type spans 6–63; it reads LDLNLLVALDALMTERKLTAAARRINLSQPAMSAAIARLRTYFGDELFSMQGRELIPT. A DNA-binding region (H-T-H motif) is located at residues 23–42; sequence LTAAARRINLSQPAMSAAIA.

Belongs to the LysR transcriptional regulatory family.

Functionally, nodD regulates the expression of the nodABCFE genes which encode other nodulation proteins. NodD is also a negative regulator of its own expression. Binds flavonoids as inducers. This chain is Nodulation protein D 1 (nodD1), found in Rhizobium meliloti (strain 1021) (Ensifer meliloti).